The sequence spans 312 residues: tRNA dimethylallyltransferase (312 aa).

15–22 (GPTAAGKS) contributes to the ATP binding site. Residue 17–22 (TAAGKS) participates in substrate binding. The tract at residues 40-43 (DSMQ) is interaction with substrate tRNA.

The protein belongs to the IPP transferase family. As to quaternary structure, monomer. It depends on Mg(2+) as a cofactor.

The enzyme catalyses adenosine(37) in tRNA + dimethylallyl diphosphate = N(6)-dimethylallyladenosine(37) in tRNA + diphosphate. Functionally, catalyzes the transfer of a dimethylallyl group onto the adenine at position 37 in tRNAs that read codons beginning with uridine, leading to the formation of N6-(dimethylallyl)adenosine (i(6)A). This chain is tRNA dimethylallyltransferase, found in Streptomyces coelicolor (strain ATCC BAA-471 / A3(2) / M145).